A 174-amino-acid polypeptide reads, in one-letter code: Transcription antitermination protein NusB (174 aa).

It belongs to the NusB family.

Functionally, involved in transcription antitermination. Required for transcription of ribosomal RNA (rRNA) genes. Binds specifically to the boxA antiterminator sequence of the ribosomal RNA (rrn) operons. This is Transcription antitermination protein NusB from Rhodopseudomonas palustris (strain ATCC BAA-98 / CGA009).